A 67-amino-acid chain; its full sequence is DNA-directed RNA polymerase subunit omega (67 aa).

It belongs to the RNA polymerase subunit omega family. The RNAP catalytic core consists of 2 alpha, 1 beta, 1 beta' and 1 omega subunit. When a sigma factor is associated with the core the holoenzyme is formed, which can initiate transcription.

The enzyme catalyses RNA(n) + a ribonucleoside 5'-triphosphate = RNA(n+1) + diphosphate. Its function is as follows. Promotes RNA polymerase assembly. Latches the N- and C-terminal regions of the beta' subunit thereby facilitating its interaction with the beta and alpha subunits. This is DNA-directed RNA polymerase subunit omega from Paraburkholderia phymatum (strain DSM 17167 / CIP 108236 / LMG 21445 / STM815) (Burkholderia phymatum).